We begin with the raw amino-acid sequence, 381 residues long: Adenylate cyclase (381 aa).

Positions 1–30 (MTVDDTGSGADGDGRVDPEPAPDSADPGED) are disordered. The region spanning 191–300 (AVGFADLVGF…TTVNLASRLT (110 aa)) is the Guanylate cyclase domain. Mg(2+) is bound by residues Asp-196 and Asp-240.

This sequence belongs to the adenylyl cyclase class-3 family. The cofactor is Mg(2+).

The catalysed reaction is ATP = 3',5'-cyclic AMP + diphosphate. In Streptomyces coelicolor (strain ATCC BAA-471 / A3(2) / M145), this protein is Adenylate cyclase (cya).